We begin with the raw amino-acid sequence, 471 residues long: 3-isopropylmalate dehydratase large subunit (471 aa).

Residues Cys-346, Cys-406, and Cys-409 each coordinate [4Fe-4S] cluster.

The protein belongs to the aconitase/IPM isomerase family. LeuC type 1 subfamily. Heterodimer of LeuC and LeuD. [4Fe-4S] cluster is required as a cofactor.

The catalysed reaction is (2R,3S)-3-isopropylmalate = (2S)-2-isopropylmalate. It participates in amino-acid biosynthesis; L-leucine biosynthesis; L-leucine from 3-methyl-2-oxobutanoate: step 2/4. Functionally, catalyzes the isomerization between 2-isopropylmalate and 3-isopropylmalate, via the formation of 2-isopropylmaleate. The chain is 3-isopropylmalate dehydratase large subunit from Bacillus pumilus (strain SAFR-032).